Consider the following 334-residue polypeptide: Putative B3 domain-containing protein At3g49610 (334 aa).

Disordered regions lie at residues 69-89 and 133-178; these read ERRTLGSSPTKTNTLFEGSEK and DEFE…KFDP. Polar residues-rich tracts occupy residues 73–84 and 141–157; these read LGSSPTKTNTLF and KSPTIRNSQSSPSSCLM. The span at 161 to 173 shows a compositional bias: basic residues; that stretch reads KRKRYQSSGKSKK. The TF-B3 DNA-binding region spans 229-334; the sequence is FNKLLRNDFL…GVLCFALEKE (106 aa).

It is found in the nucleus. The chain is Putative B3 domain-containing protein At3g49610 from Arabidopsis thaliana (Mouse-ear cress).